Here is a 134-residue protein sequence, read N- to C-terminus: Large ribosomal subunit protein uL16c (134 aa).

Belongs to the universal ribosomal protein uL16 family. In terms of assembly, part of the 50S ribosomal subunit.

The protein localises to the plastid. Its subcellular location is the chloroplast. This chain is Large ribosomal subunit protein uL16c, found in Atropa belladonna (Belladonna).